We begin with the raw amino-acid sequence, 189 residues long: NADH-ubiquinone oxidoreductase 20.9 kDa subunit (189 aa).

The chain crosses the membrane as a helical span at residues 73 to 88; that stretch reads AMRLATAVGFFGGFLY.

Complex I is composed of about 40 different subunits. Post-translationally, the N-terminus is blocked.

It is found in the mitochondrion inner membrane. It catalyses the reaction a ubiquinone + NADH + 5 H(+)(in) = a ubiquinol + NAD(+) + 4 H(+)(out). In terms of biological role, transfer of electrons from NADH to the respiratory chain. The immediate electron acceptor for the enzyme is believed to be ubiquinone. This Neurospora crassa (strain ATCC 24698 / 74-OR23-1A / CBS 708.71 / DSM 1257 / FGSC 987) protein is NADH-ubiquinone oxidoreductase 20.9 kDa subunit (nuo20.9).